The following is a 261-amino-acid chain: Potassium/proton antiporter CemA (261 aa).

3 helical membrane-spanning segments follow: residues 138–158 (IISH…CLIL), 186–206 (ILLV…ELMI), and 221–241 (IISG…KYWI).

This sequence belongs to the CemA family.

Its subcellular location is the plastid. The protein localises to the chloroplast inner membrane. It catalyses the reaction K(+)(in) + H(+)(out) = K(+)(out) + H(+)(in). Contributes to K(+)/H(+) antiport activity by supporting proton efflux to control proton extrusion and homeostasis in chloroplasts in a light-dependent manner to modulate photosynthesis. Prevents excessive induction of non-photochemical quenching (NPQ) under continuous-light conditions. Indirectly promotes efficient inorganic carbon uptake into chloroplasts. This chain is Potassium/proton antiporter CemA, found in Cryptomeria japonica (Japanese cedar).